Reading from the N-terminus, the 467-residue chain is Cysteine--tRNA ligase (467 aa).

Zn(2+) is bound at residue Cys-30. The 'HIGH' region signature appears at 32 to 42; sequence PTVYNYIHIGN. Zn(2+)-binding residues include Cys-210, His-235, and Glu-239. The 'KMSKS' region motif lies at 267–271; sequence KMSKS. Lys-270 contacts ATP. Ser-271 carries the phosphoserine modification.

This sequence belongs to the class-I aminoacyl-tRNA synthetase family. In terms of assembly, monomer. It depends on Zn(2+) as a cofactor.

It localises to the cytoplasm. It catalyses the reaction tRNA(Cys) + L-cysteine + ATP = L-cysteinyl-tRNA(Cys) + AMP + diphosphate. The chain is Cysteine--tRNA ligase from Geobacillus thermodenitrificans (strain NG80-2).